A 409-amino-acid polypeptide reads, in one-letter code: Nitrogen permease regulator 2 homolog (409 aa).

It belongs to the NPR2 family.

It is found in the cytoplasm. The protein resides in the nucleus. Its function is as follows. Mediates inactivation of the TORC1 complex in response to amino acid starvation. Post-transcriptional regulator of nitrogen permeases. This is Nitrogen permease regulator 2 homolog from Schizosaccharomyces pombe (strain 972 / ATCC 24843) (Fission yeast).